A 617-amino-acid chain; its full sequence is Protein kinase STUNTED (617 aa).

The interval 162–187 (SSELSEGFSDKDLAKTTGQEKRKISG) is disordered. Over residues 169 to 184 (FSDKDLAKTTGQEKRK) the composition is skewed to basic and acidic residues. The 279-residue stretch at 277–555 (FSLENLIGKG…RGEDDVSKWV (279 aa)) folds into the Protein kinase domain. ATP is bound by residues 283 to 291 (IGKGGCNEV) and lysine 305. At tyrosine 350 the chain carries Phosphotyrosine. The active-site Proton acceptor is the aspartate 399. The residue at position 403 (serine 403) is a Phosphoserine. Phosphothreonine is present on threonine 439. At tyrosine 447 the chain carries Phosphotyrosine. Positions 590 to 617 (DSVSNSSLERSNNSLFSSSSSSSQELQS) are disordered. A compositionally biased stretch (low complexity) spans 591 to 617 (SVSNSSLERSNNSLFSSSSSSSQELQS).

This sequence belongs to the protein kinase superfamily. Ser/Thr protein kinase family. Expressed ubiquitously, mostly in roots, to a lower extent in leaves, floral buds and stems, and, at low levels, in flowers and siliques.

It localises to the cytoplasm. Its function is as follows. Promotes cell proliferation in the gibberellic acid (GA) signaling pathway, acting downstream of RGA, and possibly through a negative regulation of two cyclin-dependent kinase inhibitors SIM and SMR1. The polypeptide is Protein kinase STUNTED (Arabidopsis thaliana (Mouse-ear cress)).